The following is a 509-amino-acid chain: Aspartyl/glutamyl-tRNA(Asn/Gln) amidotransferase subunit B (509 aa).

Belongs to the GatB/GatE family. GatB subfamily. As to quaternary structure, heterotrimer of A, B and C subunits.

The enzyme catalyses L-glutamyl-tRNA(Gln) + L-glutamine + ATP + H2O = L-glutaminyl-tRNA(Gln) + L-glutamate + ADP + phosphate + H(+). The catalysed reaction is L-aspartyl-tRNA(Asn) + L-glutamine + ATP + H2O = L-asparaginyl-tRNA(Asn) + L-glutamate + ADP + phosphate + 2 H(+). Functionally, allows the formation of correctly charged Asn-tRNA(Asn) or Gln-tRNA(Gln) through the transamidation of misacylated Asp-tRNA(Asn) or Glu-tRNA(Gln) in organisms which lack either or both of asparaginyl-tRNA or glutaminyl-tRNA synthetases. The reaction takes place in the presence of glutamine and ATP through an activated phospho-Asp-tRNA(Asn) or phospho-Glu-tRNA(Gln). The polypeptide is Aspartyl/glutamyl-tRNA(Asn/Gln) amidotransferase subunit B (Psychrobacter cryohalolentis (strain ATCC BAA-1226 / DSM 17306 / VKM B-2378 / K5)).